The sequence spans 502 residues: Cytochrome P450 71B17 (502 aa).

A helical transmembrane segment spans residues methionine 1–cysteine 21. Cysteine 444 serves as a coordination point for heme.

It belongs to the cytochrome P450 family. Heme is required as a cofactor.

It localises to the membrane. This is Cytochrome P450 71B17 (CYP71B17) from Arabidopsis thaliana (Mouse-ear cress).